Reading from the N-terminus, the 109-residue chain is Putative antitoxin HigA3 (109 aa).

The HTH cro/C1-type domain maps to L41–V97. A DNA-binding region (H-T-H motif) is located at residues Q53–S72.

Functionally, putative antitoxin component of a type II toxin-antitoxin (TA) system. Its cognate toxin would be HigB3. The sequence is that of Putative antitoxin HigA3 from Mycobacterium tuberculosis (strain ATCC 25618 / H37Rv).